A 250-amino-acid chain; its full sequence is Formylaminopyrimidine transport permease protein ThiX (250 aa).

A run of 6 helical transmembrane segments spans residues 5 to 25, 62 to 82, 94 to 114, 115 to 135, 172 to 192, and 216 to 236; these read YQAL…EISA, IISI…LLMF, LLVA…VLWF, GYSI…PITV, LPSF…GAAV, and PGVF…FAAI. An ABC transmembrane type-1 domain is found at 56–237; it reads LPATLAIISI…LGILGFAAIK (182 aa).

The protein belongs to the binding-protein-dependent transport system permease family. As to quaternary structure, the complex is likely composed of an ATP-binding protein (ThiZ), a transmembrane protein (ThiX) and a solute-binding protein (ThiY).

It localises to the cell membrane. The protein operates within cofactor biosynthesis; thiamine diphosphate biosynthesis. Its function is as follows. Participates in a thiamine pyrimidine salvage pathway as part of the ABC transporter complex ThiXYZ involved in the import of thiamine degradation products such as the formylaminopyrimidine N-formyl-4-amino-5-aminomethyl-2-methylpyrimidine (FAMP). Is probably responsible for the translocation of the substrate across the membrane. This Halalkalibacterium halodurans (strain ATCC BAA-125 / DSM 18197 / FERM 7344 / JCM 9153 / C-125) (Bacillus halodurans) protein is Formylaminopyrimidine transport permease protein ThiX.